The chain runs to 597 residues: Elongation factor 4 (597 aa).

In terms of domain architecture, tr-type G spans 2–184 (KHIRNFSIIA…EIVARIPAPV (183 aa)). Residues 14–19 (DHGKST) and 131–134 (NKID) each bind GTP.

The protein belongs to the TRAFAC class translation factor GTPase superfamily. Classic translation factor GTPase family. LepA subfamily.

It localises to the cell inner membrane. The catalysed reaction is GTP + H2O = GDP + phosphate + H(+). Functionally, required for accurate and efficient protein synthesis under certain stress conditions. May act as a fidelity factor of the translation reaction, by catalyzing a one-codon backward translocation of tRNAs on improperly translocated ribosomes. Back-translocation proceeds from a post-translocation (POST) complex to a pre-translocation (PRE) complex, thus giving elongation factor G a second chance to translocate the tRNAs correctly. Binds to ribosomes in a GTP-dependent manner. The chain is Elongation factor 4 from Aeromonas salmonicida (strain A449).